A 227-amino-acid chain; its full sequence is Peptidyl-tRNA hydrolase (227 aa).

Residue Tyr-14 coordinates tRNA. The Proton acceptor role is filled by His-19. Residues Phe-64, Asn-66, and Asn-112 each coordinate tRNA. A disordered region spans residues 182–227 (RIALLTQPPKPPKPPKPPKDGAKETAGKGTEAETAKPPGPAAGRTG). Residues 198-215 (PPKDGAKETAGKGTEAET) are compositionally biased toward basic and acidic residues.

It belongs to the PTH family. Monomer.

It is found in the cytoplasm. The enzyme catalyses an N-acyl-L-alpha-aminoacyl-tRNA + H2O = an N-acyl-L-amino acid + a tRNA + H(+). In terms of biological role, hydrolyzes ribosome-free peptidyl-tRNAs (with 1 or more amino acids incorporated), which drop off the ribosome during protein synthesis, or as a result of ribosome stalling. Functionally, catalyzes the release of premature peptidyl moieties from peptidyl-tRNA molecules trapped in stalled 50S ribosomal subunits, and thus maintains levels of free tRNAs and 50S ribosomes. The polypeptide is Peptidyl-tRNA hydrolase (Rhodospirillum centenum (strain ATCC 51521 / SW)).